The chain runs to 687 residues: Chloride channel protein ClC-Ka (687 aa).

The next 4 helical transmembrane spans lie at 52–72 (FLMT…FAIG), 161–181 (LFLG…AYLG), 202–222 (VAAA…GVLF), and 236–256 (YWRG…LAVF). The Ca(2+) site is built by glutamate 259, glutamate 261, aspartate 278, and glutamate 281. The next 6 helical transmembrane spans lie at 282-302 (IFFF…YLFC), 329-349 (ALAT…HFLA), 396-416 (FTIF…LILA), 417-437 (TTIP…AAIG), 452-472 (IVTG…AGAA), and 486-506 (LLAF…MAVL). The Cytoplasmic segment spans residues 507–687 (AANAIAQSCQ…SNLTNPPAPK (181 aa)). 2 consecutive CBS domains span residues 551-609 (MNHS…EPPS) and 626-684 (CPTE…TNPP).

The protein belongs to the chloride channel (TC 2.A.49) family. CLCNKA subfamily. Homodimer. Interacts with BSND.

The protein localises to the basolateral cell membrane. It catalyses the reaction chloride(in) = chloride(out). The catalysed reaction is bromide(in) = bromide(out). The enzyme catalyses nitrate(in) = nitrate(out). It carries out the reaction iodide(out) = iodide(in). With respect to regulation, activated by extracellular Ca(2+) and inhibited by extracellular acidic pH. In terms of biological role, anion-selective channel permeable to small monovalent anions with ion selectivity for chloride &gt; bromide &gt; nitrate &gt; iodide. Forms a homodimeric channel where each subunit has its own ion conduction pathway. May conduct double-barreled currents controlled by two types of gates, two fast gates that control each subunit independently and a slow common gate that opens and shuts off both subunits simultaneously. Assembles with the regulatory subunit BSND/Barttin for sorting at the basolateral plasma membrane domain and functional switch to the ion conducting state. CLCNKA:BSND channels display mostly a linear current-voltage relationship with fast gating at negative potentials. Mediates transepithelial chloride transport from the lumen to interstitial compartment along the thin ascending limb of Henle's loop, contributing to generation of hypertonic medullary interstitium as a countercurrent system to achieve urine concentration. Conducts chloride currents in the stria vascularis of the inner ear to establish the endocochlear potential necessary for normal hearing. This chain is Chloride channel protein ClC-Ka, found in Homo sapiens (Human).